Consider the following 97-residue polypeptide: Large ribosomal subunit protein uL23 (97 aa).

It belongs to the universal ribosomal protein uL23 family. As to quaternary structure, part of the 50S ribosomal subunit. Contacts protein L29, and trigger factor when it is bound to the ribosome.

Its function is as follows. One of the early assembly proteins it binds 23S rRNA. One of the proteins that surrounds the polypeptide exit tunnel on the outside of the ribosome. Forms the main docking site for trigger factor binding to the ribosome. The sequence is that of Large ribosomal subunit protein uL23 from Sinorhizobium medicae (strain WSM419) (Ensifer medicae).